We begin with the raw amino-acid sequence, 224 residues long: MNEKKAVILLSGGLDSATVAALAKTEGYACYSMSFDYGQRHRAELRAAERVARQLGMVEHKVIGLDLGGIGGSALTDPAIAVPESPCEGIPVTYVPARNTVFLALALGWAEVLGARDIFIGVNAVDYSGYPDCRPAFIEAFERMANLATKAGVEGQGFRIRAPLQNLGKDEIIRAGLRHGVDYGLTVSCYQADEEGRACGRCDSCRLRAAGFATAGVTDPTRYG.

10–20 (LSGGLDSATVA) contacts ATP. Zn(2+) is bound by residues cysteine 189, cysteine 199, cysteine 202, and cysteine 205.

Belongs to the QueC family. It depends on Zn(2+) as a cofactor.

It catalyses the reaction 7-carboxy-7-deazaguanine + NH4(+) + ATP = 7-cyano-7-deazaguanine + ADP + phosphate + H2O + H(+). The protein operates within purine metabolism; 7-cyano-7-deazaguanine biosynthesis. Catalyzes the ATP-dependent conversion of 7-carboxy-7-deazaguanine (CDG) to 7-cyano-7-deazaguanine (preQ(0)). The protein is 7-cyano-7-deazaguanine synthase of Azotobacter vinelandii (strain DJ / ATCC BAA-1303).